Reading from the N-terminus, the 109-residue chain is Cell division protein ZapA (109 aa).

Residues 21-99 (PDQRDALNQA…IEQALLEQGR (79 aa)) adopt a coiled-coil conformation.

This sequence belongs to the ZapA family. Type 1 subfamily. Homodimer. Interacts with FtsZ.

The protein localises to the cytoplasm. In terms of biological role, activator of cell division through the inhibition of FtsZ GTPase activity, therefore promoting FtsZ assembly into bundles of protofilaments necessary for the formation of the division Z ring. It is recruited early at mid-cell but it is not essential for cell division. The sequence is that of Cell division protein ZapA from Shigella boydii serotype 18 (strain CDC 3083-94 / BS512).